The sequence spans 436 residues: GTPase Der (436 aa).

EngA-type G domains follow at residues 4-167 (PTIA…PNEY) and 175-351 (IKFS…ESQN). Residues 10–17 (GRPNVGKS), 57–61 (DTGGI), 119–122 (NKVD), 181–188 (GRPNVGKS), 229–233 (DTAGM), and 294–297 (NKWD) contribute to the GTP site. One can recognise a KH-like domain in the interval 352 to 436 (TRIPSAVLND…PIHLIARKRK (85 aa)).

It belongs to the TRAFAC class TrmE-Era-EngA-EngB-Septin-like GTPase superfamily. EngA (Der) GTPase family. Associates with the 50S ribosomal subunit.

Its function is as follows. GTPase that plays an essential role in the late steps of ribosome biogenesis. The polypeptide is GTPase Der (Streptococcus pneumoniae (strain JJA)).